Reading from the N-terminus, the 202-residue chain is T-cell surface glycoprotein CD3 epsilon chain (202 aa).

The N-terminal stretch at 1–21 (MQSRNLWRILGLCLLSVGAWG) is a signal peptide. Over 22-122 (QDEDFKASDD…VCANCIEVNL (101 aa)) the chain is Extracellular. An Ig-like domain is found at 37–107 (PEKRFKVSIS…ADSIKEKSYL (71 aa)). An intrachain disulfide couples Cys54 to Cys96. Residues 123–143 (MAVVTIIVADICLTLGLLLMV) traverse the membrane as a helical segment. At 144–202 (YYWSKTRKANAKPVMRGTGAGSRPRGQNKEKPPPVPNPDYEPIRKGQQDLYSGLNQRGI) the chain is on the cytoplasmic side. The disordered stretch occupies residues 156 to 202 (PVMRGTGAGSRPRGQNKEKPPPVPNPDYEPIRKGQQDLYSGLNQRGI). Residues 170–187 (QNKEKPPPVPNPDYEPIR) form an NUMB-binding region region. The ITAM domain maps to 173 to 200 (EKPPPVPNPDYEPIRKGQQDLYSGLNQR). Residues 174 to 181 (KPPPVPNP) are proline-rich sequence. Residues Tyr183 and Tyr194 each carry the phosphotyrosine modification. A compositionally biased stretch (polar residues) spans 192-202 (DLYSGLNQRGI).

In terms of assembly, the TCR-CD3 complex is composed of a CD3D/CD3E and a CD3G/CD3E heterodimers that preferentially associate with TCRalpha and TCRbeta, respectively, to form TCRalpha/CD3E/CD3G and TCRbeta/CD3G/CD3E trimers. In turn, the hexamer interacts with CD3Z homodimer to form the TCR-CD3 complex. Alternatively, TCRalpha and TCRbeta can be replaced by TCRgamma and TCRdelta. Interacts with CD6. Interacts (via Proline-rich sequence) with NCK1; the interaction is ligand dependent but independent of tyrosine kinase activation. In terms of processing, phosphorylated on Tyr residues after T-cell receptor triggering by LCK in association with CD4/CD8.

It is found in the cell membrane. Part of the TCR-CD3 complex present on T-lymphocyte cell surface that plays an essential role in adaptive immune response. When antigen presenting cells (APCs) activate T-cell receptor (TCR), TCR-mediated signals are transmitted across the cell membrane by the CD3 chains CD3D, CD3E, CD3G and CD3Z. All CD3 chains contain immunoreceptor tyrosine-based activation motifs (ITAMs) in their cytoplasmic domain. Upon TCR engagement, these motifs become phosphorylated by Src family protein tyrosine kinases LCK and FYN, resulting in the activation of downstream signaling pathways. In addition of this role of signal transduction in T-cell activation, CD3E plays an essential role in correct T-cell development. Also participates in internalization and cell surface down-regulation of TCR-CD3 complexes via endocytosis sequences present in CD3E cytosolic region. In addition to its role as a TCR coreceptor, it serves as a receptor for ITPRIPL1. Ligand recognition inhibits T-cell activation by promoting interaction with NCK1, which prevents CD3E-ZAP70 interaction and blocks the ERK-NFkB signaling cascade and calcium influx. This Canis lupus familiaris (Dog) protein is T-cell surface glycoprotein CD3 epsilon chain (CD3E).